The chain runs to 150 residues: Head completion nuclease (150 aa).

Active-site residues include Glu29, Asp68, and Lys84.

The protein belongs to the Caudovirales head completion nuclease family.

Its function is as follows. During phage morphogenesis, plays an essential role in the head-tail joining step. The associated nuclease activity is essential for morphogenesis, possibly by cleaving packaged DNA to enable the joining of heads to tails. Displays both exo- and endonuclease activity. In Enterobacteria phage T4 (Bacteriophage T4), this protein is Head completion nuclease (50).